A 427-amino-acid chain; its full sequence is 3-phosphoshikimate 1-carboxyvinyltransferase (427 aa).

Positions 20, 21, and 25 each coordinate 3-phosphoshikimate. Lysine 20 lines the phosphoenolpyruvate pocket. 2 residues coordinate phosphoenolpyruvate: glycine 92 and arginine 120. 3-phosphoshikimate-binding residues include serine 166, glutamine 168, aspartate 312, and lysine 339. Position 168 (glutamine 168) interacts with phosphoenolpyruvate. Aspartate 312 serves as the catalytic Proton acceptor. Residues arginine 343 and arginine 385 each contribute to the phosphoenolpyruvate site.

This sequence belongs to the EPSP synthase family. Monomer.

The protein localises to the cytoplasm. The catalysed reaction is 3-phosphoshikimate + phosphoenolpyruvate = 5-O-(1-carboxyvinyl)-3-phosphoshikimate + phosphate. It functions in the pathway metabolic intermediate biosynthesis; chorismate biosynthesis; chorismate from D-erythrose 4-phosphate and phosphoenolpyruvate: step 6/7. In terms of biological role, catalyzes the transfer of the enolpyruvyl moiety of phosphoenolpyruvate (PEP) to the 5-hydroxyl of shikimate-3-phosphate (S3P) to produce enolpyruvyl shikimate-3-phosphate and inorganic phosphate. This is 3-phosphoshikimate 1-carboxyvinyltransferase from Streptococcus gordonii (strain Challis / ATCC 35105 / BCRC 15272 / CH1 / DL1 / V288).